A 166-amino-acid polypeptide reads, in one-letter code: MKYTSYILAFQLCIVLGSLGCYCQDPYVKEAENLKKYFNAGDSDVADNGTLFLNILRTWREEGDRKIMQSQIISFYFKLFKNFKDNQSIQKSMETIKEDMNVKFFNSNKRKQDDFERLTNYSVTDLNVQRKAIHELIQVMAELSPAPKIGKRKRSQTLFRGRRASQ.

The N-terminal stretch at 1–23 is a signal peptide; that stretch reads MKYTSYILAFQLCIVLGSLGCYC. Residue glutamine 24 is modified to Pyrrolidone carboxylic acid. N-linked (GlcNAc...) asparagine glycans are attached at residues asparagine 48, asparagine 86, and asparagine 120.

Belongs to the type II (or gamma) interferon family. In terms of assembly, homodimer. Interacts with IFNGR1 (via extracellular domain); this interaction promotes IFNGR1 dimerization. As to expression, released primarily from activated T lymphocytes.

Its subcellular location is the secreted. Its function is as follows. Type II interferon produced by immune cells such as T-cells and NK cells that plays crucial roles in antimicrobial, antiviral, and antitumor responses by activating effector immune cells and enhancing antigen presentation. Primarily signals through the JAK-STAT pathway after interaction with its receptor IFNGR1 to affect gene regulation. Upon IFNG binding, IFNGR1 intracellular domain opens out to allow association of downstream signaling components JAK2, JAK1 and STAT1, leading to STAT1 activation, nuclear translocation and transcription of IFNG-regulated genes. Many of the induced genes are transcription factors such as IRF1 that are able to further drive regulation of a next wave of transcription. Plays a role in class I antigen presentation pathway by inducing a replacement of catalytic proteasome subunits with immunoproteasome subunits. In turn, increases the quantity, quality, and repertoire of peptides for class I MHC loading. Increases the efficiency of peptide generation also by inducing the expression of activator PA28 that associates with the proteasome and alters its proteolytic cleavage preference. Up-regulates as well MHC II complexes on the cell surface by promoting expression of several key molecules such as cathepsins B/CTSB, H/CTSH, and L/CTSL. Participates in the regulation of hematopoietic stem cells during development and under homeostatic conditions by affecting their development, quiescence, and differentiation. The polypeptide is Interferon gamma (IFNG) (Saimiri sciureus (Common squirrel monkey)).